A 124-amino-acid chain; its full sequence is Small ribosomal subunit protein uS12 (124 aa).

At Asp-89 the chain carries 3-methylthioaspartic acid.

It belongs to the universal ribosomal protein uS12 family. Part of the 30S ribosomal subunit. Contacts proteins S8 and S17. May interact with IF1 in the 30S initiation complex.

Its function is as follows. With S4 and S5 plays an important role in translational accuracy. In terms of biological role, interacts with and stabilizes bases of the 16S rRNA that are involved in tRNA selection in the A site and with the mRNA backbone. Located at the interface of the 30S and 50S subunits, it traverses the body of the 30S subunit contacting proteins on the other side and probably holding the rRNA structure together. The combined cluster of proteins S8, S12 and S17 appears to hold together the shoulder and platform of the 30S subunit. The chain is Small ribosomal subunit protein uS12 from Acinetobacter baylyi (strain ATCC 33305 / BD413 / ADP1).